Reading from the N-terminus, the 426-residue chain is MLNIKWIRENQELFDDKLRQRFIEPMAKRIEELDGKKRKITNLIQEFQHARKVKSKILGNINPKSGEEFEGLQRDVKDINEKLEELEQDLNNNNELNELLNTLPNIPDEEVPYGIDESMNKLIRTHGEVDLNAQNKKQHFELGVKLDLMDFEQTAKISGARFVTLKGDLAKLERALANFMLDVHTGEFGFLEVSPPVLVRDNAMYNSGQLPKFADESFATTNGYRLIPTAEVSLVNMVADTIIPREKLPMRLVAYTPCFRSEAGSSGRDTRGMIRLHQFSKVELVSITTPEESKNEHEYMTNASETILQKLGLPYRTMLLCTGDMGFASQKTYDIEVWLPGQKQYREIASCSNCGDFQARRMKARYKEFGSHDTTLVHTLNASGLPIGRTMVAILENYQNEDGSITVPDVLVNYMGGLQKITAYKE.

Residue 229 to 231 participates in L-serine binding; it reads TAE. ATP is bound at residue 260 to 262; sequence RSE. Glu283 is an L-serine binding site. ATP is bound at residue 347 to 350; sequence EIAS. An L-serine-binding site is contributed by Ser383.

The protein belongs to the class-II aminoacyl-tRNA synthetase family. Type-1 seryl-tRNA synthetase subfamily. Homodimer. The tRNA molecule binds across the dimer.

The protein localises to the cytoplasm. The enzyme catalyses tRNA(Ser) + L-serine + ATP = L-seryl-tRNA(Ser) + AMP + diphosphate + H(+). It catalyses the reaction tRNA(Sec) + L-serine + ATP = L-seryl-tRNA(Sec) + AMP + diphosphate + H(+). It functions in the pathway aminoacyl-tRNA biosynthesis; selenocysteinyl-tRNA(Sec) biosynthesis; L-seryl-tRNA(Sec) from L-serine and tRNA(Sec): step 1/1. Catalyzes the attachment of serine to tRNA(Ser). Is also able to aminoacylate tRNA(Sec) with serine, to form the misacylated tRNA L-seryl-tRNA(Sec), which will be further converted into selenocysteinyl-tRNA(Sec). The polypeptide is Serine--tRNA ligase (Rickettsia bellii (strain OSU 85-389)).